The following is a 231-amino-acid chain: LexA repressor (231 aa).

Residues 1–24 (MTDRKEHKMKPGRRPTEGMTPSQE) form a disordered region. The segment at residues 43-62 (VKEIAEALGMKTPSAHEQVQ) is a DNA-binding region (H-T-H motif). Active-site for autocatalytic cleavage activity residues include S146 and K183.

The protein belongs to the peptidase S24 family. Homodimer.

The enzyme catalyses Hydrolysis of Ala-|-Gly bond in repressor LexA.. Functionally, represses a number of genes involved in the response to DNA damage (SOS response), including recA and lexA. In the presence of single-stranded DNA, RecA interacts with LexA causing an autocatalytic cleavage which disrupts the DNA-binding part of LexA, leading to derepression of the SOS regulon and eventually DNA repair. This Magnetococcus marinus (strain ATCC BAA-1437 / JCM 17883 / MC-1) protein is LexA repressor.